The chain runs to 493 residues: Glutamyl-tRNA(Gln) amidotransferase subunit A (493 aa).

Catalysis depends on charge relay system residues Lys-79 and Ser-159. Residue Ser-183 is the Acyl-ester intermediate of the active site.

Belongs to the amidase family. GatA subfamily. In terms of assembly, heterotrimer of A, B and C subunits.

The enzyme catalyses L-glutamyl-tRNA(Gln) + L-glutamine + ATP + H2O = L-glutaminyl-tRNA(Gln) + L-glutamate + ADP + phosphate + H(+). In terms of biological role, allows the formation of correctly charged Gln-tRNA(Gln) through the transamidation of misacylated Glu-tRNA(Gln) in organisms which lack glutaminyl-tRNA synthetase. The reaction takes place in the presence of glutamine and ATP through an activated gamma-phospho-Glu-tRNA(Gln). The sequence is that of Glutamyl-tRNA(Gln) amidotransferase subunit A from Agrobacterium fabrum (strain C58 / ATCC 33970) (Agrobacterium tumefaciens (strain C58)).